We begin with the raw amino-acid sequence, 901 residues long: HTH-type transcriptional regulator MalT (901 aa).

39-46 (SPAGYGKT) contributes to the ATP binding site. The HTH luxR-type domain maps to 829 to 894 (ELIRTSPLTQ…DAVQHAQQLL (66 aa)). A DNA-binding region (H-T-H motif) is located at residues 853 to 872 (NEQIAGELAVAATTIKTHIR).

This sequence belongs to the MalT family. Monomer in solution. Oligomerizes to an active state in the presence of the positive effectors ATP and maltotriose.

With respect to regulation, activated by ATP and maltotriose, which are both required for DNA binding. In terms of biological role, positively regulates the transcription of the maltose regulon whose gene products are responsible for uptake and catabolism of malto-oligosaccharides. Specifically binds to the promoter region of its target genes, recognizing a short DNA motif called the MalT box. This chain is HTH-type transcriptional regulator MalT, found in Enterobacter sp. (strain 638).